The primary structure comprises 229 residues: Putative N-acetylmannosamine-6-phosphate 2-epimerase (229 aa).

This sequence belongs to the NanE family.

The enzyme catalyses an N-acyl-D-glucosamine 6-phosphate = an N-acyl-D-mannosamine 6-phosphate. Its pathway is amino-sugar metabolism; N-acetylneuraminate degradation; D-fructose 6-phosphate from N-acetylneuraminate: step 3/5. Converts N-acetylmannosamine-6-phosphate (ManNAc-6-P) to N-acetylglucosamine-6-phosphate (GlcNAc-6-P). The sequence is that of Putative N-acetylmannosamine-6-phosphate 2-epimerase from Escherichia coli O7:K1 (strain IAI39 / ExPEC).